Here is an 85-residue protein sequence, read N- to C-terminus: Alpha-insect toxin BjaIT (85 aa).

A signal peptide spans 1-19 (MNYLVVICFALLLMTGVES). One can recognise an LCN-type CS-alpha/beta domain in the interval 21 to 83 (RDAYIADNLN…VPIRIPGACR (63 aa)). Cystine bridges form between Cys-31-Cys-82, Cys-35-Cys-55, Cys-41-Cys-65, and Cys-45-Cys-67. Position 83 is an arginine amide (Arg-83).

The protein belongs to the long (4 C-C) scorpion toxin superfamily. Sodium channel inhibitor family. Alpha subfamily. In terms of tissue distribution, expressed by the venom gland.

Its subcellular location is the secreted. Its function is as follows. Alpha toxins bind voltage-independently at site-3 of sodium channels (Nav) and inhibit the inactivation of the activated channels, thereby blocking neuronal transmission. This toxin is active against insects (para/tipE). This Hottentotta judaicus (Black scorpion) protein is Alpha-insect toxin BjaIT.